Consider the following 418-residue polypeptide: MLSPTNSTSKKAPVPPQDSSKPVLISEEPQNQLLQKVARTALAVLLVVVTLGLILLFYSFSDLQSFPWCCQTRPSTKEQPTISIPVPLPSPPLAVPRPSTPPPPVISRPSTPPAPTPAISPPSTPSAPKPSTPPPLPPKAPKPVKTQEDLLPFVPEQVFVEMYEDMARRWIIEALVPAWDSDIIFKCLCYFHTLYQGLIPLETFPPATIFNFKQKIISILEDKKAVLRGEPIKGSLPICCSEENYRRHLHGTTLLPVFMWYHPTPKTLSDTMQTMKQLAIKGSVGASHWLLVIVDIQARRLVYFDSLYNYVMSPEDMEKDLQSFAQQLDQVYPAYDSQKFSVKIAAKEVIQKGSGSSCGAWCCQFLHWYLRDPFTDALNDLPVDSVERHENLASFVQACEAAVQDLPELFWPEAKALF.

A compositionally biased stretch (polar residues) spans 1-10; sequence MLSPTNSTSK. Residues 1–23 form a disordered region; it reads MLSPTNSTSKKAPVPPQDSSKPV. Residues 40 to 60 traverse the membrane as a helical segment; the sequence is TALAVLLVVVTLGLILLFYSF. The segment at 72 to 143 is disordered; the sequence is TRPSTKEQPT…PPLPPKAPKP (72 aa). Residues 86-141 show a composition bias toward pro residues; it reads VPLPSPPLAVPRPSTPPPPVISRPSTPPAPTPAISPPSTPSAPKPSTPPPLPPKAP. Catalysis depends on residues His288, Asp305, and Cys358.

The protein belongs to the peptidase C48 family.

The protein localises to the secreted. It localises to the host cell. Its subcellular location is the membrane. Functionally, effector proteins function to alter host cell physiology and promote bacterial survival in host tissues. This protease possesses deubiquitinating and deneddylating activities. The protein is Deubiquitinase and deneddylase Dub1 (cdu1) of Chlamydia trachomatis serovar D (strain ATCC VR-885 / DSM 19411 / UW-3/Cx).